The sequence spans 415 residues: Phosphoglycerate kinase (415 aa).

Residues 28–30 (DLN), arginine 44, 67–70 (HQGR), arginine 124, and arginine 164 each bind substrate. ATP contacts are provided by residues glutamate 336 and 362 to 365 (GGHF).

This sequence belongs to the phosphoglycerate kinase family.

It is found in the cytoplasm. It carries out the reaction (2R)-3-phosphoglycerate + ATP = (2R)-3-phospho-glyceroyl phosphate + ADP. It participates in carbohydrate degradation; glycolysis; pyruvate from D-glyceraldehyde 3-phosphate: step 2/5. This is Phosphoglycerate kinase (pgk) from Aeropyrum pernix (strain ATCC 700893 / DSM 11879 / JCM 9820 / NBRC 100138 / K1).